Here is a 195-residue protein sequence, read N- to C-terminus: Transcription repressor OFP17 (195 aa).

One can recognise an OVATE domain in the interval 130–190 (EDNAVEDACR…SRFYGELCRD (61 aa)).

It is found in the nucleus. Functionally, transcriptional repressor that may regulate multiple aspects of plant growth and development through the regulation of BEL1-LIKE (BLH) and KNOX TALE (KNAT) homeodomain transcription factors. The sequence is that of Transcription repressor OFP17 (OFP17) from Arabidopsis thaliana (Mouse-ear cress).